A 296-amino-acid chain; its full sequence is 4-hydroxy-tetrahydrodipicolinate synthase (296 aa).

T49 contacts pyruvate. Y137 functions as the Proton donor/acceptor in the catalytic mechanism. K166 serves as the catalytic Schiff-base intermediate with substrate. I208 is a pyruvate binding site.

This sequence belongs to the DapA family. In terms of assembly, homotetramer; dimer of dimers.

The protein localises to the cytoplasm. It carries out the reaction L-aspartate 4-semialdehyde + pyruvate = (2S,4S)-4-hydroxy-2,3,4,5-tetrahydrodipicolinate + H2O + H(+). It participates in amino-acid biosynthesis; L-lysine biosynthesis via DAP pathway; (S)-tetrahydrodipicolinate from L-aspartate: step 3/4. Catalyzes the condensation of (S)-aspartate-beta-semialdehyde [(S)-ASA] and pyruvate to 4-hydroxy-tetrahydrodipicolinate (HTPA). This chain is 4-hydroxy-tetrahydrodipicolinate synthase, found in Chlorobium limicola (strain DSM 245 / NBRC 103803 / 6330).